An 830-amino-acid polypeptide reads, in one-letter code: Beta-glucosidase A (830 aa).

Aspartate 769 is a catalytic residue.

The protein belongs to the glycosyl hydrolase 3 family.

The catalysed reaction is Hydrolysis of terminal, non-reducing beta-D-glucosyl residues with release of beta-D-glucose.. Its function is as follows. B.fibrisolvens beta-glucosidase hydrolyzes cellobiose to a limited extent, cellotriose to cellobiose and glucose, and cellotetraose and cellopentaose to predominantly glucose. In Butyrivibrio fibrisolvens, this protein is Beta-glucosidase A (bglA).